Consider the following 188-residue polypeptide: Ribosome maturation factor RimM (188 aa).

The region spanning aspartate 96–glycine 169 is the PRC barrel domain.

The protein belongs to the RimM family. In terms of assembly, binds ribosomal protein uS19.

It is found in the cytoplasm. An accessory protein needed during the final step in the assembly of 30S ribosomal subunit, possibly for assembly of the head region. Essential for efficient processing of 16S rRNA. May be needed both before and after RbfA during the maturation of 16S rRNA. It has affinity for free ribosomal 30S subunits but not for 70S ribosomes. The sequence is that of Ribosome maturation factor RimM from Rhizobium etli (strain ATCC 51251 / DSM 11541 / JCM 21823 / NBRC 15573 / CFN 42).